The primary structure comprises 417 residues: Serine hydroxymethyltransferase (417 aa).

Lysine 54 is modified (N6-acetyllysine). (6S)-5,6,7,8-tetrahydrofolate contacts are provided by residues leucine 121 and 125-127 (GHL). At lysine 229 the chain carries N6-(pyridoxal phosphate)lysine. Lysine 250, lysine 285, and lysine 354 each carry N6-acetyllysine. 355–357 (SPF) lines the (6S)-5,6,7,8-tetrahydrofolate pocket. Lysine 375 carries the post-translational modification N6-acetyllysine.

This sequence belongs to the SHMT family. Homodimer. The cofactor is pyridoxal 5'-phosphate.

It localises to the cytoplasm. The enzyme catalyses (6R)-5,10-methylene-5,6,7,8-tetrahydrofolate + glycine + H2O = (6S)-5,6,7,8-tetrahydrofolate + L-serine. The protein operates within one-carbon metabolism; tetrahydrofolate interconversion. It participates in amino-acid biosynthesis; glycine biosynthesis; glycine from L-serine: step 1/1. In terms of biological role, catalyzes the reversible interconversion of serine and glycine with tetrahydrofolate (THF) serving as the one-carbon carrier. This reaction serves as the major source of one-carbon groups required for the biosynthesis of purines, thymidylate, methionine, and other important biomolecules. Also exhibits THF-independent aldolase activity toward beta-hydroxyamino acids, producing glycine and aldehydes, via a retro-aldol mechanism. The chain is Serine hydroxymethyltransferase from Shigella sonnei (strain Ss046).